We begin with the raw amino-acid sequence, 281 residues long: 2,3,4,5-tetrahydropyridine-2,6-dicarboxylate N-succinyltransferase (281 aa).

Residues Arg108 and Asp145 each coordinate substrate.

The protein belongs to the transferase hexapeptide repeat family. In terms of assembly, homotrimer.

The protein localises to the cytoplasm. It carries out the reaction (S)-2,3,4,5-tetrahydrodipicolinate + succinyl-CoA + H2O = (S)-2-succinylamino-6-oxoheptanedioate + CoA. Its pathway is amino-acid biosynthesis; L-lysine biosynthesis via DAP pathway; LL-2,6-diaminopimelate from (S)-tetrahydrodipicolinate (succinylase route): step 1/3. The sequence is that of 2,3,4,5-tetrahydropyridine-2,6-dicarboxylate N-succinyltransferase from Rhodopseudomonas palustris (strain ATCC BAA-98 / CGA009).